A 599-amino-acid chain; its full sequence is Aspartate--tRNA(Asp/Asn) ligase (599 aa).

Glutamate 180 serves as a coordination point for L-aspartate. The tract at residues 204-207 (QLLK) is aspartate. Arginine 226 is an L-aspartate binding site. Residues 226–228 (RDE) and glutamine 235 contribute to the ATP site. Residue histidine 457 coordinates L-aspartate. Residue glutamate 491 coordinates ATP. Arginine 498 is a binding site for L-aspartate. 543 to 546 (GWDR) contributes to the ATP binding site. Positions 565-599 (KAGGGRDPLTGAPAPISDEQRAETGVDYDPDADEN) are disordered. The segment covering 590-599 (VDYDPDADEN) has biased composition (acidic residues).

This sequence belongs to the class-II aminoacyl-tRNA synthetase family. Type 1 subfamily. As to quaternary structure, homodimer.

The protein resides in the cytoplasm. It carries out the reaction tRNA(Asx) + L-aspartate + ATP = L-aspartyl-tRNA(Asx) + AMP + diphosphate. Its function is as follows. Aspartyl-tRNA synthetase with relaxed tRNA specificity since it is able to aspartylate not only its cognate tRNA(Asp) but also tRNA(Asn). Reaction proceeds in two steps: L-aspartate is first activated by ATP to form Asp-AMP and then transferred to the acceptor end of tRNA(Asp/Asn). In Bifidobacterium longum (strain DJO10A), this protein is Aspartate--tRNA(Asp/Asn) ligase.